Reading from the N-terminus, the 308-residue chain is Protease HtpX homolog (308 aa).

2 consecutive transmembrane segments (helical) span residues 16-36 and 39-59; these read LLSLLVGLGIAALASLIIYAV and YLFGIYSIGIIFGVFVLVLMM. A Zn(2+)-binding site is contributed by His-149. Glu-150 is a catalytic residue. Residue His-153 coordinates Zn(2+). A run of 2 helical transmembrane segments spans residues 161-181 and 192-212; these read VIMAIGLIPTLIFYFAYTTLF and IILALVLMVVSFLFNIMVLSV. Glu-217 is a binding site for Zn(2+).

It belongs to the peptidase M48B family. Zn(2+) serves as cofactor.

The protein resides in the cell membrane. The protein is Protease HtpX homolog of Thermoplasma volcanium (strain ATCC 51530 / DSM 4299 / JCM 9571 / NBRC 15438 / GSS1).